Here is a 417-residue protein sequence, read N- to C-terminus: NADH-quinone oxidoreductase subunit D (417 aa).

It belongs to the complex I 49 kDa subunit family. In terms of assembly, NDH-1 is composed of 14 different subunits. Subunits NuoB, C, D, E, F, and G constitute the peripheral sector of the complex.

The protein localises to the cell inner membrane. The enzyme catalyses a quinone + NADH + 5 H(+)(in) = a quinol + NAD(+) + 4 H(+)(out). In terms of biological role, NDH-1 shuttles electrons from NADH, via FMN and iron-sulfur (Fe-S) centers, to quinones in the respiratory chain. The immediate electron acceptor for the enzyme in this species is believed to be ubiquinone. Couples the redox reaction to proton translocation (for every two electrons transferred, four hydrogen ions are translocated across the cytoplasmic membrane), and thus conserves the redox energy in a proton gradient. The chain is NADH-quinone oxidoreductase subunit D from Paracidovorax citrulli (strain AAC00-1) (Acidovorax citrulli).